We begin with the raw amino-acid sequence, 333 residues long: DNA-directed RNA polymerase subunit alpha (333 aa).

Residues 1 to 234 form an alpha N-terminal domain (alpha-NTD) region; it reads MQISVNEFLT…QQLAAFVDLK (234 aa). The alpha C-terminal domain (alpha-CTD) stretch occupies residues 248–333; it reads IDPILLRPVD…SLKKDDKATA (86 aa).

The protein belongs to the RNA polymerase alpha chain family. Homodimer. The RNAP catalytic core consists of 2 alpha, 1 beta, 1 beta' and 1 omega subunit. When a sigma factor is associated with the core the holoenzyme is formed, which can initiate transcription.

It carries out the reaction RNA(n) + a ribonucleoside 5'-triphosphate = RNA(n+1) + diphosphate. In terms of biological role, DNA-dependent RNA polymerase catalyzes the transcription of DNA into RNA using the four ribonucleoside triphosphates as substrates. In Pseudomonas fluorescens (strain Pf0-1), this protein is DNA-directed RNA polymerase subunit alpha.